Here is a 566-residue protein sequence, read N- to C-terminus: Phosphatidylinositol 3,4,5-trisphosphate 3-phosphatase TPTE2 (566 aa).

The next 4 membrane-spanning stretches (helical) occupy residues 135–155 (SFAF…LLLA), 173–193 (ISLA…FVEG), 208–228 (AIIV…IKFL), and 234–254 (WIHL…HLIH). The Phosphatase tensin-type domain occupies 272 to 448 (RRYTRDGFDL…GYFAQVKHLY (177 aa)). Cys382 acts as the Phosphocysteine intermediate in catalysis. In terms of domain architecture, C2 tensin-type spans 455-566 (RRILFIKRFI…ILHSFRLVFT (112 aa)).

The protein resides in the endoplasmic reticulum membrane. It localises to the golgi apparatus membrane. It catalyses the reaction a 1,2-diacyl-sn-glycero-3-phospho-(1D-myo-inositol-3,4,5-trisphosphate) + H2O = a 1,2-diacyl-sn-glycero-3-phospho-(1D-myo-inositol-4,5-bisphosphate) + phosphate. Its function is as follows. Acts as a lipid phosphatase, removing the phosphate in the D3 position of the inositol ring from phosphatidylinositol 3,4,5-trisphosphate. The chain is Phosphatidylinositol 3,4,5-trisphosphate 3-phosphatase TPTE2 (TPTE2) from Macaca fascicularis (Crab-eating macaque).